The following is a 337-amino-acid chain: Ornithine carbamoyltransferase (337 aa).

Residues 57-60, Q84, R108, and 135-138 each bind carbamoyl phosphate; these read STRT and HPTQ. L-ornithine is bound by residues N167, D231, and 235–236; that span reads SM. Residues 272–273 and R317 each bind carbamoyl phosphate; that span reads CL.

It belongs to the aspartate/ornithine carbamoyltransferase superfamily. OTCase family.

The protein localises to the cytoplasm. The catalysed reaction is carbamoyl phosphate + L-ornithine = L-citrulline + phosphate + H(+). It functions in the pathway amino-acid degradation; L-arginine degradation via ADI pathway; carbamoyl phosphate from L-arginine: step 2/2. Reversibly catalyzes the transfer of the carbamoyl group from carbamoyl phosphate (CP) to the N(epsilon) atom of ornithine (ORN) to produce L-citrulline. This is Ornithine carbamoyltransferase from Streptococcus equi subsp. equi (strain 4047).